We begin with the raw amino-acid sequence, 165 residues long: NADH-quinone oxidoreductase subunit I (165 aa).

4Fe-4S ferredoxin-type domains follow at residues 57–86 and 96–125; these read RRYENGEERCIACKLCEAVCPALAITIESD and SRYDIDLTKCIFCGFCEESCPVDSIVETHI. The [4Fe-4S] cluster site is built by Cys-66, Cys-69, Cys-72, Cys-76, Cys-105, Cys-108, Cys-111, and Cys-115.

The protein belongs to the complex I 23 kDa subunit family. NDH-1 is composed of 14 different subunits. Subunits NuoA, H, J, K, L, M, N constitute the membrane sector of the complex. The cofactor is [4Fe-4S] cluster.

It is found in the cell inner membrane. It catalyses the reaction a quinone + NADH + 5 H(+)(in) = a quinol + NAD(+) + 4 H(+)(out). Its function is as follows. NDH-1 shuttles electrons from NADH, via FMN and iron-sulfur (Fe-S) centers, to quinones in the respiratory chain. The immediate electron acceptor for the enzyme in this species is believed to be ubiquinone. Couples the redox reaction to proton translocation (for every two electrons transferred, four hydrogen ions are translocated across the cytoplasmic membrane), and thus conserves the redox energy in a proton gradient. This Polaromonas naphthalenivorans (strain CJ2) protein is NADH-quinone oxidoreductase subunit I.